Here is a 132-residue protein sequence, read N- to C-terminus: Outer membrane protein RomA (132 aa).

This sequence to M.tuberculosis Rv0906.

The protein localises to the cell outer membrane. This is Outer membrane protein RomA (romA) from Klebsiella pneumoniae.